Reading from the N-terminus, the 130-residue chain is Small ribosomal subunit protein uS9 (130 aa).

Positions 105–130 (TRDSRMKERKKPGLRGARRAPQFSKR) are disordered. The segment covering 111 to 130 (KERKKPGLRGARRAPQFSKR) has biased composition (basic residues).

Belongs to the universal ribosomal protein uS9 family.

The sequence is that of Small ribosomal subunit protein uS9 from Lysinibacillus sphaericus (strain C3-41).